The primary structure comprises 202 residues: dTTP/UTP pyrophosphatase (202 aa).

Asp76 (proton acceptor) is an active-site residue.

It belongs to the Maf family. YhdE subfamily. The cofactor is a divalent metal cation.

The protein resides in the cytoplasm. It carries out the reaction dTTP + H2O = dTMP + diphosphate + H(+). The catalysed reaction is UTP + H2O = UMP + diphosphate + H(+). Nucleoside triphosphate pyrophosphatase that hydrolyzes dTTP and UTP. May have a dual role in cell division arrest and in preventing the incorporation of modified nucleotides into cellular nucleic acids. In Neisseria meningitidis serogroup B (strain ATCC BAA-335 / MC58), this protein is dTTP/UTP pyrophosphatase.